A 244-amino-acid chain; its full sequence is RNA transcription, translation and transport factor protein (244 aa).

3 positions are modified to N6-acetyllysine: K20, K62, and K98.

Belongs to the RTRAF family. As to quaternary structure, homodimer. Interacts with FAM98A (via N- and C-terminus). Interacts with NIN; which may prevent phosphorylation of NIN. Interacts with POLR2A. Component of a tRNA-splicing ligase complex with FAM98B, DDX1 and RTCB. (Microbial infection) Interacts with influenza A virus (IAV) RNA polymerase subunits PA, PB1 and PB2, and nucleocapsid NP. Associates with IAV polymerase complexes both in the nucleus and cytosol. Associates with IAV ribonucleoproteins (vRNP) packaged in virions. Interacts with hepatitis C virus core protein p19. In terms of tissue distribution, widely expressed. Expressed at high level in heart and skeletal muscle. Expressed at intermediate level in liver, pancreas, fetal brain and fetal lung. Weakly expressed in adult brain, adult lung, placenta, fetal liver and fetal kidney. Overexpressed in many brain tumors.

The protein localises to the nucleus. It localises to the cytoplasm. The protein resides in the cytosol. Its subcellular location is the perinuclear region. It is found in the cytoskeleton. The protein localises to the microtubule organizing center. It localises to the centrosome. Functionally, RNA-binding protein involved in modulation of mRNA transcription by Polymerase II. Component of the tRNA-splicing ligase complex and is required for tRNA ligation. May be required for RNA transport. Its function is as follows. (Microbial infection) In case of infection by influenza virus A (IVA), is involved in viral replication. In Homo sapiens (Human), this protein is RNA transcription, translation and transport factor protein.